Consider the following 144-residue polypeptide: Large ribosomal subunit protein uL15 (144 aa).

The tract at residues 1–48 (MRLNTLSPAAGSKSAAKRVGRGIGSGTGKTCGRGHKGQKSRSGGGVRI) is disordered. A compositionally biased stretch (gly residues) spans 21–31 (RGIGSGTGKTC).

It belongs to the universal ribosomal protein uL15 family. In terms of assembly, part of the 50S ribosomal subunit.

Its function is as follows. Binds to the 23S rRNA. In Shewanella woodyi (strain ATCC 51908 / MS32), this protein is Large ribosomal subunit protein uL15.